The following is a 431-amino-acid chain: Protein translocase subunit SecY (431 aa).

The Cytoplasmic portion of the chain corresponds to 1 to 17 (MFKTISNFMRVSDIRNK). The chain crosses the membrane as a helical span at residues 18–38 (IIFTLLMLIVFRIGAFIPVPY). The Extracellular segment spans residues 39 to 66 (VNAEALQAQSQMGVFDLLNTFGGGALYQ). A helical transmembrane segment spans residues 67 to 87 (FSIFAMGITPYITASIIIQLL). Residues 88-115 (QMDVVPKFTEWSKQGEVGRRKLAQFTRY) lie on the Cytoplasmic side of the membrane. The chain crosses the membrane as a helical span at residues 116–136 (FTIVLGFIQALGMSYGFNNLA). The Extracellular portion of the chain corresponds to 137-145 (NGMLIEKSG). The chain crosses the membrane as a helical span at residues 146–166 (VSTYLIIALVLTGGTAFLMWL). Over 167 to 177 (GEQITSHGVGN) the chain is Cytoplasmic. Residues 178–198 (GISIIIFAGIVSSIPKTIGQI) traverse the membrane as a helical segment. Topologically, residues 199–213 (YETQFVGSNDQLFIH) are extracellular. Residues 214–234 (IVKVALLVIAILAVIVGVIFI) traverse the membrane as a helical segment. The Cytoplasmic segment spans residues 235–261 (QQAVRKIAIQYAKGTGRSPAGGGQSTH). The chain crosses the membrane as a helical span at residues 262–282 (LPLKVNPAGVIPVIFAVAFLI). The Extracellular portion of the chain corresponds to 283–308 (TPRTIASFFGTNDVTKWIQNNFDNTH). The chain crosses the membrane as a helical span at residues 309 to 329 (PVGMAIYVALIIAFTYFYAFV). Over 330-368 (QVNPEQMADNLKKQGGYIPGVRPGKMTQDRITSILYRLT) the chain is Cytoplasmic. Helical transmembrane passes span 369–389 (FVGS…IQFA) and 390–410 (GLPQ…GVAL). Residues 411 to 431 (ETMKQLESQLVKRNYRGFMKN) are Cytoplasmic-facing.

It belongs to the SecY/SEC61-alpha family. As to quaternary structure, component of the Sec protein translocase complex. Heterotrimer consisting of SecY, SecE and SecG subunits. The heterotrimers can form oligomers, although 1 heterotrimer is thought to be able to translocate proteins. Interacts with the ribosome. Interacts with SecDF, and other proteins may be involved. Interacts with SecA. Interacts with FloT.

The protein resides in the cell membrane. It is found in the membrane raft. In terms of biological role, the central subunit of the protein translocation channel SecYEG. Consists of two halves formed by TMs 1-5 and 6-10. These two domains form a lateral gate at the front which open onto the bilayer between TMs 2 and 7, and are clamped together by SecE at the back. The channel is closed by both a pore ring composed of hydrophobic SecY resides and a short helix (helix 2A) on the extracellular side of the membrane which forms a plug. The plug probably moves laterally to allow the channel to open. The ring and the pore may move independently. The chain is Protein translocase subunit SecY from Bacillus subtilis (strain 168).